The following is a 426-amino-acid chain: UDP-N-acetylglucosamine 1-carboxyvinyltransferase (426 aa).

A phosphoenolpyruvate-binding site is contributed by 22–23 (KN). Arginine 94 contributes to the UDP-N-acetyl-alpha-D-glucosamine binding site. Residue cysteine 118 is the Proton donor of the active site. Cysteine 118 carries the post-translational modification 2-(S-cysteinyl)pyruvic acid O-phosphothioketal. UDP-N-acetyl-alpha-D-glucosamine contacts are provided by residues 123-127 (RPVDL), aspartate 310, and isoleucine 332.

Belongs to the EPSP synthase family. MurA subfamily.

Its subcellular location is the cytoplasm. The catalysed reaction is phosphoenolpyruvate + UDP-N-acetyl-alpha-D-glucosamine = UDP-N-acetyl-3-O-(1-carboxyvinyl)-alpha-D-glucosamine + phosphate. Its pathway is cell wall biogenesis; peptidoglycan biosynthesis. Cell wall formation. Adds enolpyruvyl to UDP-N-acetylglucosamine. The protein is UDP-N-acetylglucosamine 1-carboxyvinyltransferase of Hyphomonas neptunium (strain ATCC 15444).